Here is a 503-residue protein sequence, read N- to C-terminus: Probable protein kinase UbiB (503 aa).

A helical membrane pass occupies residues 13–35 (TFYRYRLAGLCASLMGSGWICAL). The Protein kinase domain maps to 120 to 491 (EFETEPIASA…QQRQSLWLAV (372 aa)). ATP is bound by residues 126–134 (IASASIAQV) and lysine 148. The Proton acceptor role is filled by aspartate 283. The chain crosses the membrane as a helical span at residues 485 to 502 (QSLWLAVIAVVLLLILLL).

The protein belongs to the ABC1 family. UbiB subfamily.

The protein resides in the cell inner membrane. It participates in cofactor biosynthesis; ubiquinone biosynthesis [regulation]. Is probably a protein kinase regulator of UbiI activity which is involved in aerobic coenzyme Q (ubiquinone) biosynthesis. In Neisseria meningitidis serogroup B (strain ATCC BAA-335 / MC58), this protein is Probable protein kinase UbiB.